Reading from the N-terminus, the 1155-residue chain is RhoGEF domain-containing protein gxcJ (1155 aa).

Disordered stretches follow at residues 114-216 (ENNS…NFLK), 259-333 (LNKK…IPSN), 429-460 (LVSQ…DSLE), 484-508 (LNNE…TTTT), and 604-639 (SNSN…NNYQ). 3 stretches are compositionally biased toward low complexity: residues 115–153 (NNSI…TNNN), 161–211 (TITN…NNNN), and 260–303 (NKKS…NNNN). Residues 192–257 (NNNNNNNNNN…KDIEKLNSAL (66 aa)) are a coiled coil. The span at 304–319 (YKPTITSSQTQPSLME) shows a compositional bias: polar residues. The span at 320–330 (NSKDIDKKEKI) shows a compositional bias: basic and acidic residues. Residues 441 to 457 (FLASASSSSTTTITTTD) are compositionally biased toward low complexity. Residues 604-637 (SNSNSSNNNNSNSNNITNSNSSSFSKKNSNNNNN) are compositionally biased toward low complexity. A DH domain is found at 700 to 874 (HRTNLIKEIL…EKIVGTINSQ (175 aa)). Residues 1084–1155 (SHRLSIPSTS…LVKSLVNIKT (72 aa)) form a disordered region. 2 stretches are compositionally biased toward low complexity: residues 1093 to 1121 (SSPN…GSPN) and 1128 to 1137 (QQQQLQQQQQ).

Functionally, GTPase-activating protein. In Dictyostelium discoideum (Social amoeba), this protein is RhoGEF domain-containing protein gxcJ (gxcJ).